The following is a 489-amino-acid chain: Inositol-pentakisphosphate 2-kinase (489 aa).

The EXKPK motif signature appears at 136–140 (EIKPK).

This sequence belongs to the IPK1 type 2 family.

It is found in the cytoplasm. The protein localises to the nucleus. It carries out the reaction 1D-myo-inositol 1,3,4,5,6-pentakisphosphate + ATP = 1D-myo-inositol hexakisphosphate + ADP + H(+). In terms of biological role, phosphorylates Ins(1,3,4,5,6)P5 at position 2 to form Ins(1,2,3,4,5,6)P6 (InsP6 or phytate). InsP6 is involved in many processes such as mRNA export, non-homologous end-joining, endocytosis, ion channel regulation. It also protects cells from TNF-alpha-induced apoptosis. This is Inositol-pentakisphosphate 2-kinase (Ippk) from Rattus norvegicus (Rat).